The chain runs to 120 residues: MFLLYEYDIFWVFLIISSVIPILAFLISGVLAPLSKEPEKLSSYESGIEPMGDAWVQFRIRYYMFALVFVVFDVETVFLYPWAMSFDVLGVSVFIEALIFVLILIVGLVYAWRKGALEWS.

The next 3 membrane-spanning stretches (helical) occupy residues 9 to 29, 64 to 84, and 88 to 108; these read IFWV…LISG, MFAL…PWAM, and VLGV…IVGL.

This sequence belongs to the complex I subunit 3 family. In terms of assembly, NDH is composed of at least 16 different subunits, 5 of which are encoded in the nucleus.

The protein resides in the plastid. It localises to the chloroplast thylakoid membrane. The catalysed reaction is a plastoquinone + NADH + (n+1) H(+)(in) = a plastoquinol + NAD(+) + n H(+)(out). It catalyses the reaction a plastoquinone + NADPH + (n+1) H(+)(in) = a plastoquinol + NADP(+) + n H(+)(out). NDH shuttles electrons from NAD(P)H:plastoquinone, via FMN and iron-sulfur (Fe-S) centers, to quinones in the photosynthetic chain and possibly in a chloroplast respiratory chain. The immediate electron acceptor for the enzyme in this species is believed to be plastoquinone. Couples the redox reaction to proton translocation, and thus conserves the redox energy in a proton gradient. This chain is NAD(P)H-quinone oxidoreductase subunit 3, chloroplastic, found in Cucumis sativus (Cucumber).